The sequence spans 539 residues: Glucose-6-phosphate isomerase (539 aa).

E349 functions as the Proton donor in the catalytic mechanism. Active-site residues include H380 and K508. A disordered region spans residues 519 to 539 (ESGASGQHDPSTAGLIQRLKR).

It belongs to the GPI family.

Its subcellular location is the cytoplasm. The catalysed reaction is alpha-D-glucose 6-phosphate = beta-D-fructose 6-phosphate. It functions in the pathway carbohydrate biosynthesis; gluconeogenesis. It participates in carbohydrate degradation; glycolysis; D-glyceraldehyde 3-phosphate and glycerone phosphate from D-glucose: step 2/4. Catalyzes the reversible isomerization of glucose-6-phosphate to fructose-6-phosphate. The protein is Glucose-6-phosphate isomerase of Caulobacter vibrioides (strain ATCC 19089 / CIP 103742 / CB 15) (Caulobacter crescentus).